The sequence spans 141 residues: ATP synthase epsilon chain (141 aa).

This sequence belongs to the ATPase epsilon chain family. As to quaternary structure, F-type ATPases have 2 components, CF(1) - the catalytic core - and CF(0) - the membrane proton channel. CF(1) has five subunits: alpha(3), beta(3), gamma(1), delta(1), epsilon(1). CF(0) has three main subunits: a, b and c.

It is found in the cell inner membrane. In terms of biological role, produces ATP from ADP in the presence of a proton gradient across the membrane. In Burkholderia thailandensis (strain ATCC 700388 / DSM 13276 / CCUG 48851 / CIP 106301 / E264), this protein is ATP synthase epsilon chain.